The following is a 569-amino-acid chain: CTP synthase (569 aa).

Residues 1–272 (MARPKNVKHI…DSRVLKKLGI (272 aa)) are amidoligase domain. Ser18 is a binding site for CTP. Ser18 contributes to the UTP binding site. 19 to 24 (SLGKGI) is an ATP binding site. Tyr59 contributes to the L-glutamine binding site. Position 76 (Asp76) interacts with ATP. Positions 76 and 146 each coordinate Mg(2+). Residues 153–155 (DIE), 193–198 (KTKPTQ), and Lys229 each bind CTP. UTP-binding positions include 193 to 198 (KTKPTQ) and Lys229. Residues 299–543 (TIGICGKYTE…VAAAKDYARG (245 aa)) form the Glutamine amidotransferase type-1 domain. Gly363 contributes to the L-glutamine binding site. Cys390 functions as the Nucleophile; for glutamine hydrolysis in the catalytic mechanism. L-glutamine is bound by residues 391–394 (LGMQ), Glu414, and Arg471. Active-site residues include His516 and Glu518.

The protein belongs to the CTP synthase family. As to quaternary structure, homotetramer.

It catalyses the reaction UTP + L-glutamine + ATP + H2O = CTP + L-glutamate + ADP + phosphate + 2 H(+). It carries out the reaction L-glutamine + H2O = L-glutamate + NH4(+). The enzyme catalyses UTP + NH4(+) + ATP = CTP + ADP + phosphate + 2 H(+). It functions in the pathway pyrimidine metabolism; CTP biosynthesis via de novo pathway; CTP from UDP: step 2/2. Its activity is regulated as follows. Allosterically activated by GTP, when glutamine is the substrate; GTP has no effect on the reaction when ammonia is the substrate. The allosteric effector GTP functions by stabilizing the protein conformation that binds the tetrahedral intermediate(s) formed during glutamine hydrolysis. Inhibited by the product CTP, via allosteric rather than competitive inhibition. Catalyzes the ATP-dependent amination of UTP to CTP with either L-glutamine or ammonia as the source of nitrogen. Regulates intracellular CTP levels through interactions with the four ribonucleotide triphosphates. In Chlorobium chlorochromatii (strain CaD3), this protein is CTP synthase.